The chain runs to 173 residues: Crossover junction endodeoxyribonuclease RuvC (173 aa).

Residues Asp-8, Glu-67, and Asp-139 contribute to the active site. Mg(2+)-binding residues include Asp-8, Glu-67, and Asp-139.

This sequence belongs to the RuvC family. Homodimer which binds Holliday junction (HJ) DNA. The HJ becomes 2-fold symmetrical on binding to RuvC with unstacked arms; it has a different conformation from HJ DNA in complex with RuvA. In the full resolvosome a probable DNA-RuvA(4)-RuvB(12)-RuvC(2) complex forms which resolves the HJ. It depends on Mg(2+) as a cofactor.

It localises to the cytoplasm. It catalyses the reaction Endonucleolytic cleavage at a junction such as a reciprocal single-stranded crossover between two homologous DNA duplexes (Holliday junction).. In terms of biological role, the RuvA-RuvB-RuvC complex processes Holliday junction (HJ) DNA during genetic recombination and DNA repair. Endonuclease that resolves HJ intermediates. Cleaves cruciform DNA by making single-stranded nicks across the HJ at symmetrical positions within the homologous arms, yielding a 5'-phosphate and a 3'-hydroxyl group; requires a central core of homology in the junction. The consensus cleavage sequence is 5'-(A/T)TT(C/G)-3'. Cleavage occurs on the 3'-side of the TT dinucleotide at the point of strand exchange. HJ branch migration catalyzed by RuvA-RuvB allows RuvC to scan DNA until it finds its consensus sequence, where it cleaves and resolves the cruciform DNA. In Photobacterium profundum (strain SS9), this protein is Crossover junction endodeoxyribonuclease RuvC.